A 290-amino-acid chain; its full sequence is Arylamine N-acetyltransferase 1 (290 aa).

The residue at position 1 (Met-1) is an N-acetylmethionine. Cys-68 functions as the Acyl-thioester intermediate in the catalytic mechanism. CoA is bound by residues Thr-103 and Gly-104. 106-107 provides a ligand contact to substrate; it reads IH. Residues His-107 and Asp-122 contribute to the active site. The CoA site is built by Tyr-208 and Ser-214.

Belongs to the arylamine N-acetyltransferase family.

Its subcellular location is the cytoplasm. It catalyses the reaction an arylamine + acetyl-CoA = an N-acetylarylamine + CoA. The protein is Arylamine N-acetyltransferase 1 (NAT1) of Oryctolagus cuniculus (Rabbit).